The sequence spans 365 residues: Chorismate synthase (365 aa).

A compositionally biased stretch (basic and acidic residues) spans isoleucine 41–glycine 51. The disordered stretch occupies residues isoleucine 41 to alanine 62. An NADP(+)-binding site is contributed by arginine 48. FMN contacts are provided by residues arginine 125–serine 127, glycine 285, lysine 300–serine 304, and arginine 327.

This sequence belongs to the chorismate synthase family. FMNH2 serves as cofactor.

The enzyme catalyses 5-O-(1-carboxyvinyl)-3-phosphoshikimate = chorismate + phosphate. It participates in metabolic intermediate biosynthesis; chorismate biosynthesis; chorismate from D-erythrose 4-phosphate and phosphoenolpyruvate: step 7/7. In terms of biological role, catalyzes the anti-1,4-elimination of the C-3 phosphate and the C-6 proR hydrogen from 5-enolpyruvylshikimate-3-phosphate (EPSP) to yield chorismate, which is the branch point compound that serves as the starting substrate for the three terminal pathways of aromatic amino acid biosynthesis. This reaction introduces a second double bond into the aromatic ring system. The sequence is that of Chorismate synthase from Methanosarcina acetivorans (strain ATCC 35395 / DSM 2834 / JCM 12185 / C2A).